The following is a 459-amino-acid chain: Argininosuccinate lyase (459 aa).

The protein belongs to the lyase 1 family. Argininosuccinate lyase subfamily.

Its subcellular location is the cytoplasm. The enzyme catalyses 2-(N(omega)-L-arginino)succinate = fumarate + L-arginine. It participates in amino-acid biosynthesis; L-arginine biosynthesis; L-arginine from L-ornithine and carbamoyl phosphate: step 3/3. The chain is Argininosuccinate lyase from Ruminiclostridium cellulolyticum (strain ATCC 35319 / DSM 5812 / JCM 6584 / H10) (Clostridium cellulolyticum).